Reading from the N-terminus, the 365-residue chain is MNLAAMDPTTYDAQLTAKRIKLEQAFAQFETPSVEVFASEPAHYRMRAEFRIWHEGDDLYYYMFDKVLNDKVRCDQYLPASALINQMMAALIAELKPNHSLRHKLFQVDFLSTLSGEILVSLLYHRQLDDQWRSEAAALKARLSSQFKVNIIGRARKQKIDLDKDFVVESLQVNDKVFHYKQIENSFTQPNAKVAIKMLEWAIDVTQHSQGDLLELYCGNGNFSIALAQNFNRVLATELAKPSVDAAQYNIEVNNIDNLQIIRMSAEEFSDAMAKKRSFRRLEGIDLDSYVCNTIFVDPPRAGIDPATLELVQGYERILYISCNPDTLKDNLQQLNQTHKVTRFALFDQFPYTDHMETGVLLERR.

The S-adenosyl-L-methionine site is built by Gln-189, Tyr-217, Asn-222, Glu-238, and Asp-298. Cys-323 acts as the Nucleophile in catalysis. The active-site Proton acceptor is Glu-357.

The protein belongs to the class I-like SAM-binding methyltransferase superfamily. RNA M5U methyltransferase family. TrmA subfamily.

It catalyses the reaction uridine(54) in tRNA + S-adenosyl-L-methionine = 5-methyluridine(54) in tRNA + S-adenosyl-L-homocysteine + H(+). The catalysed reaction is uridine(341) in tmRNA + S-adenosyl-L-methionine = 5-methyluridine(341) in tmRNA + S-adenosyl-L-homocysteine + H(+). In terms of biological role, dual-specificity methyltransferase that catalyzes the formation of 5-methyluridine at position 54 (m5U54) in all tRNAs, and that of position 341 (m5U341) in tmRNA (transfer-mRNA). This Shewanella sp. (strain MR-4) protein is tRNA/tmRNA (uracil-C(5))-methyltransferase.